A 63-amino-acid polypeptide reads, in one-letter code: Sec-independent protein translocase protein TatA (63 aa).

A helical transmembrane segment spans residues methionine 1–glycine 21. The disordered stretch occupies residues glycine 42 to lysine 63. Residues lysine 53–lysine 63 are compositionally biased toward basic and acidic residues.

The protein belongs to the TatA/E family. In terms of assembly, the Tat system comprises two distinct complexes: a TatABC complex, containing multiple copies of TatA, TatB and TatC subunits, and a separate TatA complex, containing only TatA subunits. Substrates initially bind to the TatABC complex, which probably triggers association of the separate TatA complex to form the active translocon.

The protein localises to the cell inner membrane. Part of the twin-arginine translocation (Tat) system that transports large folded proteins containing a characteristic twin-arginine motif in their signal peptide across membranes. TatA could form the protein-conducting channel of the Tat system. This chain is Sec-independent protein translocase protein TatA, found in Rhizobium etli (strain CIAT 652).